Here is a 541-residue protein sequence, read N- to C-terminus: Major facilitator-type transporter ecdD (541 aa).

Residues alanine 15–aspartate 35 form a helical membrane-spanning segment. N-linked (GlcNAc...) asparagine glycosylation occurs at asparagine 64. 4 helical membrane-spanning segments follow: residues alanine 72–glycine 92, glycine 106–alanine 126, phenylalanine 129–threonine 149, and glycine 156–leucine 176. Residues asparagine 178 and asparagine 184 are each glycosylated (N-linked (GlcNAc...) asparagine). A helical transmembrane segment spans residues isoleucine 191–proline 211. A glycan (N-linked (GlcNAc...) asparagine) is linked at asparagine 253. 6 consecutive transmembrane segments (helical) span residues leucine 277–tyrosine 297, valine 313–isoleucine 333, proline 340–glycine 360, isoleucine 384–valine 404, serine 418–leucine 440, and isoleucine 454–tyrosine 474.

The protein belongs to the major facilitator superfamily. Sugar transporter (TC 2.A.1.1) family.

The protein localises to the membrane. This chain is Major facilitator-type transporter ecdD, found in Aspergillus rugulosus (Emericella rugulosa).